The sequence spans 157 residues: Sorting nexin-3 (157 aa).

The segment at 1–21 (MSKPFQPISDVINTSPKNKSQ) is disordered. Residues 11-21 (VINTSPKNKSQ) show a composition bias toward polar residues. The PX domain occupies 32 to 152 (NFLEIEVKNP…EFIQNEKWDP (121 aa)). A 1,2-diacyl-sn-glycero-3-phospho-(1D-myo-inositol-3-phosphate)-binding residues include R75, S77, K101, and R117.

It belongs to the sorting nexin family.

It localises to the cytoplasm. It is found in the golgi apparatus membrane. The protein localises to the prevacuolar compartment membrane. Functionally, required for retention of late Golgi membrane proteins. Component of the retrieval machinery that functions by direct interaction with the cytosolic tails of certain TGN membrane proteins during the sorting/budding process at the prevacuolar compartment. Binds phosphatidylinositol 3-phosphate (PtdIns(P3)). The polypeptide is Sorting nexin-3 (SNX3) (Candida albicans (strain SC5314 / ATCC MYA-2876) (Yeast)).